A 168-amino-acid polypeptide reads, in one-letter code: Ribosome maturation factor RimM (168 aa).

The 72-residue stretch at 95 to 166 (EHEFYYSDII…RIQITPMEGL (72 aa)) folds into the PRC barrel domain.

Belongs to the RimM family. Binds ribosomal protein uS19.

It localises to the cytoplasm. Its function is as follows. An accessory protein needed during the final step in the assembly of 30S ribosomal subunit, possibly for assembly of the head region. Essential for efficient processing of 16S rRNA. May be needed both before and after RbfA during the maturation of 16S rRNA. It has affinity for free ribosomal 30S subunits but not for 70S ribosomes. The polypeptide is Ribosome maturation factor RimM (Staphylococcus saprophyticus subsp. saprophyticus (strain ATCC 15305 / DSM 20229 / NCIMB 8711 / NCTC 7292 / S-41)).